The sequence spans 585 residues: Amyloid protein-binding protein 2 (585 aa).

TPR repeat units follow at residues 50 to 83 (QGRLCQLGSEFCELEVFAKVLRALDKRHLLHHCF), 120 to 153 (IQVGFVLGGFLSDAGWYSDAEKVFLSCLQLCTLH), 206 to 239 (AALYGELCALLFAKSHYDEAYKWCIEAMKEITAG), 288 to 321 (SDTLLDYGFYLLNVDNICQSVAIYQAALDIRQSV), 333 to 367 (HEDLAYSSYVHQYSSGKFDNALFHAERAIGIITHI), 429 to 462 (AKHYGNLGRLYQSMRKFKEAEEMHIKAIQIKEQL), 471 to 505 (ALSVGHLASLYNYDMNQYENAEKLYLRSIAIGKKL), and 514 to 547 (EYDYRGLIKLYNSIGNYEKVFEYHNVLSNWNRLR).

In terms of assembly, component of a CRL2 E3 ubiquitin-protein ligase complex, also named ECS (Elongin BC-CUL2/5-SOCS-box protein) complex, composed of CUL2, Elongin BC (ELOB and ELOC), RBX1 and substrate-specific adapter APPBP2. Interacts with APP; APP interaction inhibits the E3 ubiquitin-protein ligase activity of the CRL2(APPBP2) complex. In terms of processing, rapidly degraded by the proteasome upon overexpression of a C-terminal fragment of APP.

It is found in the nucleus. The protein resides in the cytoplasm. It localises to the cytoskeleton. The protein localises to the membrane. It functions in the pathway protein modification; protein ubiquitination. With respect to regulation, E3 ubiquitin-protein ligase activity of the CRL2(APPBP2) complex is inhibited by APP. Its function is as follows. Substrate-recognition component of a Cul2-RING (CRL2) E3 ubiquitin-protein ligase complex of the DesCEND (destruction via C-end degrons) pathway, which recognizes a C-degron located at the extreme C terminus of target proteins, leading to their ubiquitination and degradation. The C-degron recognized by the DesCEND pathway is usually a motif of less than ten residues and can be present in full-length proteins, truncated proteins or proteolytically cleaved forms. The CRL2(APPBP2) complex specifically recognizes proteins with a -Arg-Xaa-Xaa-Gly degron at the C-terminus, leading to their ubiquitination and degradation. The CRL2(APPBP2) complex mediates ubiquitination and degradation of truncated SELENOV selenoproteins produced by failed UGA/Sec decoding, which end with a -Arg-Xaa-Xaa-Gly degron. May play a role in intracellular protein transport: may be involved in the translocation of APP along microtubules toward the cell surface. The sequence is that of Amyloid protein-binding protein 2 from Homo sapiens (Human).